The primary structure comprises 617 residues: ATP-dependent zinc metalloprotease FtsH (617 aa).

Residues 1–7 (MKIPFDR) lie on the Cytoplasmic side of the membrane. Residues 8-28 (WLGWPTLLLLLLGLWLLGSSL) form a helical membrane-spanning segment. Residues 29 to 102 (RDQRTVEAVP…VSYRRVRESN (74 aa)) lie on the Periplasmic side of the membrane. A helical transmembrane segment spans residues 103-123 (WLSQLLSWMAGPLLLLGFWYF). Topologically, residues 124-617 (MSRRIDGQQG…GRPAAIRQVA (494 aa)) are cytoplasmic. 198 to 205 (GPTGTGKT) serves as a coordination point for ATP. H421 contributes to the Zn(2+) binding site. Residue E422 is part of the active site. Positions 425 and 498 each coordinate Zn(2+).

In the central section; belongs to the AAA ATPase family. The protein in the C-terminal section; belongs to the peptidase M41 family. As to quaternary structure, homohexamer. Zn(2+) is required as a cofactor.

The protein localises to the cell inner membrane. Acts as a processive, ATP-dependent zinc metallopeptidase for both cytoplasmic and membrane proteins. Plays a role in the quality control of integral membrane proteins. The sequence is that of ATP-dependent zinc metalloprotease FtsH from Methylibium petroleiphilum (strain ATCC BAA-1232 / LMG 22953 / PM1).